We begin with the raw amino-acid sequence, 369 residues long: Methylthioribose-1-phosphate isomerase (369 aa).

M1 is modified (N-acetylmethionine). Omega-N-methylarginine is present on R158. D248 acts as the Proton donor in catalysis. Position 366 is a phosphoserine (S366).

The protein belongs to the eIF-2B alpha/beta/delta subunits family. MtnA subfamily.

The protein resides in the cytoplasm. It is found in the nucleus. The catalysed reaction is 5-(methylsulfanyl)-alpha-D-ribose 1-phosphate = 5-(methylsulfanyl)-D-ribulose 1-phosphate. Its pathway is amino-acid biosynthesis; L-methionine biosynthesis via salvage pathway; L-methionine from S-methyl-5-thio-alpha-D-ribose 1-phosphate: step 1/6. Functionally, catalyzes the interconversion of methylthioribose-1-phosphate (MTR-1-P) into methylthioribulose-1-phosphate (MTRu-1-P). The polypeptide is Methylthioribose-1-phosphate isomerase (Mri1) (Rattus norvegicus (Rat)).